A 350-amino-acid chain; its full sequence is ADP-ribose pyrophosphatase, mitochondrial (350 aa).

A mitochondrion-targeting transit peptide spans 1–46 (MAGRSLGKAVATVSLSVALASVTVRSSGCRAIPAPRNPFPSCGFHL). Disordered stretches follow at residues 53 to 77 (GSNGVKDNSHNKARTSPYPGSKVER) and 116 to 153 (SESSFSPRFNEKDGHVERKSQNGLYEIENGRPRNPAGR). Ser-121 bears the Phosphoserine mark. Positions 124-135 (FNEKDGHVERKS) are enriched in basic and acidic residues. In terms of domain architecture, Nudix hydrolase spans 178–334 (WKRDESGNKI…SQFIKLVAEK (157 aa)). Positions 215–237 (GMVDPGEKISATLKREFGEEALN) match the Nudix box motif.

It belongs to the Nudix hydrolase family. NudF subfamily. As to quaternary structure, monomer. Interacts with GLOD4. Mg(2+) serves as cofactor. Mn(2+) is required as a cofactor.

It localises to the mitochondrion. It catalyses the reaction ADP-D-ribose + H2O = D-ribose 5-phosphate + AMP + 2 H(+). Hydrolyzes ADP-ribose (ADPR) to AMP and ribose 5'-phosphate. The protein is ADP-ribose pyrophosphatase, mitochondrial (Nudt9) of Rattus norvegicus (Rat).